Here is a 175-residue protein sequence, read N- to C-terminus: Coagulogen (175 aa).

Cystine bridges form between Cys8/Cys167, Cys10/Cys95, Cys60/Cys161, Cys65/Cys121, Cys75/Cys168, Cys88/Cys140, Cys127/Cys170, and Cys134/Cys172.

It belongs to the coagulin family. Coagulogen is cleaved after Arg-18 and Arg-46 by a clotting enzyme contained in the hemocyte and activated by a bacterial endotoxin (lipopolysaccharide). This cleavage releases the peptide C and leaves 2 chains of coagulin, A and B, linked by two disulfide bonds. Coagulin molecules interlink to form a gel. As to expression, hemolymph.

The protein resides in the secreted. Its function is as follows. Coagulogen is a gel-forming protein of hemolymph; it hinders the spread of invaders by immobilizing them. This is Coagulogen from Carcinoscorpius rotundicauda (Mangrove horseshoe crab).